The primary structure comprises 342 residues: Ketol-acid reductoisomerase (NADP(+)) (342 aa).

The 180-residue stretch at 2–181 folds into the KARI N-terminal Rossmann domain; it reads VKVYYNGDIK…GGARAGVLET (180 aa). NADP(+) is bound by residues 25–28, Arg-48, Ser-52, and 82–85; these read YGSQ and DEQQ. His-107 is a catalytic residue. Gly-133 contributes to the NADP(+) binding site. One can recognise a KARI C-terminal knotted domain in the interval 182 to 327; the sequence is TFKEETETDL…RKLREMMPFV (146 aa). 4 residues coordinate Mg(2+): Asp-190, Glu-194, Glu-226, and Glu-230. Residue Ser-251 participates in substrate binding.

It belongs to the ketol-acid reductoisomerase family. Mg(2+) is required as a cofactor.

It carries out the reaction (2R)-2,3-dihydroxy-3-methylbutanoate + NADP(+) = (2S)-2-acetolactate + NADPH + H(+). The catalysed reaction is (2R,3R)-2,3-dihydroxy-3-methylpentanoate + NADP(+) = (S)-2-ethyl-2-hydroxy-3-oxobutanoate + NADPH + H(+). Its pathway is amino-acid biosynthesis; L-isoleucine biosynthesis; L-isoleucine from 2-oxobutanoate: step 2/4. It functions in the pathway amino-acid biosynthesis; L-valine biosynthesis; L-valine from pyruvate: step 2/4. Functionally, involved in the biosynthesis of branched-chain amino acids (BCAA). Catalyzes an alkyl-migration followed by a ketol-acid reduction of (S)-2-acetolactate (S2AL) to yield (R)-2,3-dihydroxy-isovalerate. In the isomerase reaction, S2AL is rearranged via a Mg-dependent methyl migration to produce 3-hydroxy-3-methyl-2-ketobutyrate (HMKB). In the reductase reaction, this 2-ketoacid undergoes a metal-dependent reduction by NADPH to yield (R)-2,3-dihydroxy-isovalerate. This is Ketol-acid reductoisomerase (NADP(+)) from Bacillus licheniformis (strain ATCC 14580 / DSM 13 / JCM 2505 / CCUG 7422 / NBRC 12200 / NCIMB 9375 / NCTC 10341 / NRRL NRS-1264 / Gibson 46).